Reading from the N-terminus, the 252-residue chain is Fructose-1,6-bisphosphatase/inositol-1-monophosphatase (252 aa).

Mg(2+) contacts are provided by aspartate 38, threonine 40, glutamate 67, aspartate 82, leucine 84, and aspartate 85. Substrate-binding positions include 85 to 87 (DGT), arginine 167, alanine 172, and arginine 191. Mg(2+) is bound at residue aspartate 200.

Belongs to the inositol monophosphatase superfamily. FBPase class 4 family. In terms of assembly, homodimer. Mg(2+) serves as cofactor. It depends on Mn(2+) as a cofactor.

It catalyses the reaction beta-D-fructose 1,6-bisphosphate + H2O = beta-D-fructose 6-phosphate + phosphate. It carries out the reaction a myo-inositol phosphate + H2O = myo-inositol + phosphate. Its activity is regulated as follows. Both FBPase and IMPase activities are inhibited by Ca(2+). In contrast to mammalian I-1-P phosphatases, is only very weakly inhibited by Li(+) (with an IC(50) of about 290 mM). Its function is as follows. Phosphatase with broad specificity; it can dephosphorylate fructose 1,6-bisphosphate, both D and L isomers of inositol-1-phosphate (I-1-P), 2'-AMP, pNPP, inositol-2-phosphate, beta-glycerol phosphate, and alpha-D-glucose-1-phosphate. Cannot hydrolyze glucose-6-phosphate and fructose-6-phosphate. May be involved in the biosynthesis of a unique osmolyte, di-myo-inositol 1,1-phosphate. The polypeptide is Fructose-1,6-bisphosphatase/inositol-1-monophosphatase (suhB) (Archaeoglobus fulgidus (strain ATCC 49558 / DSM 4304 / JCM 9628 / NBRC 100126 / VC-16)).